The chain runs to 617 residues: Acyl-CoA dehydrogenase family member 11 (617 aa).

Residues 1 to 47 form a disordered region; sequence MHRIGNAVRMASSSSANATITARHTQYSHAKTGGFSQTGPTLHNPYK. Low complexity predominate over residues 11–22; the sequence is ASSSSANATITA. Polar residues predominate over residues 23 to 41; the sequence is RHTQYSHAKTGGFSQTGPT. FAD-binding positions include 206–215 and 241–243; these read QWMTEKKGGS and FSS. Ser215 lines the substrate pocket. The substrate site is built by Ser267 and Arg334. Residues Arg359, 366 to 369, Glu437, Gly441, and 464 to 466 each bind FAD; these read QSKW and EGT.

The protein belongs to the acyl-CoA dehydrogenase family. As to quaternary structure, homotetramer; dimer of dimers.

Functionally, promotes adaption to elevated temperatures by regulating expression of the lipid desaturase, fat-7. Binds selectively and with high affinity to fatty acids with chain lengths from C10 to C12 and prevents them from activating fat-7 expression mediated by the nuclear hormone receptor nhr-49, leading to low levels of membrane lipid desaturation and membrane fluidity for adaption to heat. This is Acyl-CoA dehydrogenase family member 11 from Caenorhabditis elegans.